Reading from the N-terminus, the 93-residue chain is Acylphosphatase (93 aa).

Positions 6–93 (RAHILVSGEV…GDLGPFSVRH (88 aa)) constitute an Acylphosphatase-like domain. Active-site residues include Arg21 and Asn39.

It belongs to the acylphosphatase family.

It catalyses the reaction an acyl phosphate + H2O = a carboxylate + phosphate + H(+). The chain is Acylphosphatase (acyP) from Anaeromyxobacter sp. (strain Fw109-5).